Reading from the N-terminus, the 257-residue chain is NAD-capped RNA hydrolase NudC (257 aa).

Residue arginine 69 coordinates substrate. Zn(2+) is bound by residues cysteine 98 and cysteine 101. Glutamate 111 contributes to the substrate binding site. 2 residues coordinate Zn(2+): cysteine 116 and cysteine 119. Tyrosine 124 contributes to the substrate binding site. The region spanning 125 to 248 (PQIAPCIIVA…TVARRLIEDT (124 aa)) is the Nudix hydrolase domain. A divalent metal cation-binding residues include alanine 158, glutamate 174, and glutamate 178. The short motif at 159–180 (GFVEVGETLEQAVAREVMEESG) is the Nudix box element. 192-199 (QPWPFPQS) is a substrate binding site. Glutamate 219 provides a ligand contact to a divalent metal cation. A substrate-binding site is contributed by alanine 241.

This sequence belongs to the Nudix hydrolase family. NudC subfamily. As to quaternary structure, homodimer. The cofactor is Mg(2+). Requires Mn(2+) as cofactor. Zn(2+) serves as cofactor.

The catalysed reaction is a 5'-end NAD(+)-phospho-ribonucleoside in mRNA + H2O = a 5'-end phospho-adenosine-phospho-ribonucleoside in mRNA + beta-nicotinamide D-ribonucleotide + 2 H(+). It carries out the reaction NAD(+) + H2O = beta-nicotinamide D-ribonucleotide + AMP + 2 H(+). The enzyme catalyses NADH + H2O = reduced beta-nicotinamide D-ribonucleotide + AMP + 2 H(+). In terms of biological role, mRNA decapping enzyme that specifically removes the nicotinamide adenine dinucleotide (NAD) cap from a subset of mRNAs by hydrolyzing the diphosphate linkage to produce nicotinamide mononucleotide (NMN) and 5' monophosphate mRNA. The NAD-cap is present at the 5'-end of some mRNAs and stabilizes RNA against 5'-processing. Has preference for mRNAs with a 5'-end purine. Catalyzes the hydrolysis of a broad range of dinucleotide pyrophosphates. The sequence is that of NAD-capped RNA hydrolase NudC from Salmonella typhi.